The sequence spans 298 residues: Sulfate adenylyltransferase subunit 2 (298 aa).

Composition is skewed to basic and acidic residues over residues 272-282 (RTSERQGRLID) and 289-298 (MEKKKQEGYF). The interval 272–298 (RTSERQGRLIDSDSAGSMEKKKQEGYF) is disordered.

The protein belongs to the PAPS reductase family. CysD subfamily. As to quaternary structure, heterodimer composed of CysD, the smaller subunit, and CysN.

The enzyme catalyses sulfate + ATP + H(+) = adenosine 5'-phosphosulfate + diphosphate. The protein operates within sulfur metabolism; hydrogen sulfide biosynthesis; sulfite from sulfate: step 1/3. With CysN forms the ATP sulfurylase (ATPS) that catalyzes the adenylation of sulfate producing adenosine 5'-phosphosulfate (APS) and diphosphate, the first enzymatic step in sulfur assimilation pathway. APS synthesis involves the formation of a high-energy phosphoric-sulfuric acid anhydride bond driven by GTP hydrolysis by CysN coupled to ATP hydrolysis by CysD. The sequence is that of Sulfate adenylyltransferase subunit 2 from Burkholderia lata (strain ATCC 17760 / DSM 23089 / LMG 22485 / NCIMB 9086 / R18194 / 383).